Consider the following 139-residue polypeptide: Ribulose bisphosphate carboxylase small subunit (139 aa).

It belongs to the RuBisCO small chain family. Heterohexadecamer of 8 large and 8 small subunits.

Its subcellular location is the plastid. The protein resides in the chloroplast. RuBisCO catalyzes two reactions: the carboxylation of D-ribulose 1,5-bisphosphate, the primary event in carbon dioxide fixation, as well as the oxidative fragmentation of the pentose substrate in the photorespiration process. Both reactions occur simultaneously and in competition at the same active site. Although the small subunit is not catalytic it is essential for maximal activity. In Guillardia theta (Cryptophyte), this protein is Ribulose bisphosphate carboxylase small subunit.